We begin with the raw amino-acid sequence, 126 residues long: Holo-[acyl-carrier-protein] synthase (126 aa).

Mg(2+) is bound by residues D9 and E58.

It belongs to the P-Pant transferase superfamily. AcpS family. Mg(2+) is required as a cofactor.

The protein localises to the cytoplasm. The enzyme catalyses apo-[ACP] + CoA = holo-[ACP] + adenosine 3',5'-bisphosphate + H(+). Transfers the 4'-phosphopantetheine moiety from coenzyme A to a Ser of acyl-carrier-protein. This chain is Holo-[acyl-carrier-protein] synthase, found in Escherichia coli (strain ATCC 8739 / DSM 1576 / NBRC 3972 / NCIMB 8545 / WDCM 00012 / Crooks).